The following is a 506-amino-acid chain: Aminoaldehyde dehydrogenase 2 (506 aa).

A Na(+)-binding site is contributed by Asp-101. NAD(+) is bound by residues 161–163 (TPW) and 187–190 (KPSE). Leu-191 is a Na(+) binding site. Residues 241–244 (STET) and Glu-262 contribute to the NAD(+) site. Glu-262 functions as the Proton acceptor in the catalytic mechanism. Cys-297 serves as the catalytic Nucleophile. NAD(+) contacts are provided by Glu-396 and Trp-462.

It belongs to the aldehyde dehydrogenase family.

The catalysed reaction is 4-aminobutanal + NAD(+) + H2O = 4-aminobutanoate + NADH + 2 H(+). It catalyses the reaction 3-aminopropanal + NAD(+) + H2O = beta-alanine + NADH + 2 H(+). The enzyme catalyses 4-(trimethylamino)butanal + NAD(+) + H2O = 4-(trimethylamino)butanoate + NADH + 2 H(+). It carries out the reaction 4-guanidinobutanal + NAD(+) + H2O = 4-guanidinobutanoate + NADH + 2 H(+). The protein operates within amine and polyamine biosynthesis; betaine biosynthesis via choline pathway; betaine from betaine aldehyde: step 1/1. In terms of biological role, dehydrogenase that catalyzes the oxidation of several aminoaldehydes. Metabolizes and detoxifies aldehyde products of polyamine degradation to non-toxic amino acids. Catalyzes the oxidation of 4-aminobutanal and 3-aminopropanal to 4-aminobutanoate and beta-alanine, respectively. Catalyzes the oxidation of 4-(trimethylamino)butanal and 4-guanidinobutanal to 4-trimethylammoniobutanoate and 4-guanidinobutanoate, respectively. The chain is Aminoaldehyde dehydrogenase 2 from Zea mays (Maize).